Consider the following 545-residue polypeptide: Methionine--tRNA ligase (545 aa).

The 'HIGH' region signature appears at 13-23; that stretch reads PYANGPLHIGH. Zn(2+)-binding residues include Cys144, Cys147, Cys157, and Cys160. Positions 330–334 match the 'KMSKS' region motif; that stretch reads KISKS. Lys333 contributes to the ATP binding site.

This sequence belongs to the class-I aminoacyl-tRNA synthetase family. MetG type 1 subfamily. Monomer. Requires Zn(2+) as cofactor.

It is found in the cytoplasm. The catalysed reaction is tRNA(Met) + L-methionine + ATP = L-methionyl-tRNA(Met) + AMP + diphosphate. Functionally, is required not only for elongation of protein synthesis but also for the initiation of all mRNA translation through initiator tRNA(fMet) aminoacylation. The sequence is that of Methionine--tRNA ligase from Blochmanniella floridana.